The chain runs to 249 residues: Triosephosphate isomerase (249 aa).

Residues Asn12 and Lys14 each contribute to the substrate site. Lys14 carries the post-translational modification N6-acetyllysine. Position 68 is a 3'-nitrotyrosine (Tyr68). At Ser80 the chain carries Phosphoserine. His96 acts as the Electrophile in catalysis. Ser106 carries the post-translational modification Phosphoserine. A Glycyl lysine isopeptide (Lys-Gly) (interchain with G-Cter in SUMO1) cross-link involves residue Lys142. At Lys149 the chain carries N6-succinyllysine. Lys156 is modified (N6-acetyllysine; alternate). Lys156 carries the post-translational modification N6-succinyllysine; alternate. The active-site Proton acceptor is Glu166. Thr173 bears the Phosphothreonine mark. Residue Lys194 is modified to N6-acetyllysine; alternate. The residue at position 194 (Lys194) is an N6-succinyllysine; alternate. The residue at position 194 (Lys194) is an N6-methyllysine; alternate. The residue at position 198 (Ser198) is a Phosphoserine. Tyr209 carries the 3'-nitrotyrosine modification. Phosphoserine is present on Ser212. Thr214 bears the Phosphothreonine mark. Position 223 is a phosphoserine (Ser223). Lys238 is modified (N6-acetyllysine).

Belongs to the triosephosphate isomerase family. As to quaternary structure, homodimer.

The protein resides in the cytoplasm. It carries out the reaction dihydroxyacetone phosphate = methylglyoxal + phosphate. The enzyme catalyses D-glyceraldehyde 3-phosphate = dihydroxyacetone phosphate. The protein operates within carbohydrate degradation; glycolysis; D-glyceraldehyde 3-phosphate from glycerone phosphate: step 1/1. It participates in carbohydrate biosynthesis; gluconeogenesis. Functionally, triosephosphate isomerase is an extremely efficient metabolic enzyme that catalyzes the interconversion between dihydroxyacetone phosphate (DHAP) and D-glyceraldehyde-3-phosphate (G3P) in glycolysis and gluconeogenesis. In terms of biological role, it is also responsible for the non-negligible production of methylglyoxal a reactive cytotoxic side-product that modifies and can alter proteins, DNA and lipids. This Rattus norvegicus (Rat) protein is Triosephosphate isomerase (Tpi1).